The following is a 284-amino-acid chain: MEMO1 family protein STK_20620 (284 aa).

The protein belongs to the MEMO1 family.

In Sulfurisphaera tokodaii (strain DSM 16993 / JCM 10545 / NBRC 100140 / 7) (Sulfolobus tokodaii), this protein is MEMO1 family protein STK_20620.